Here is a 107-residue protein sequence, read N- to C-terminus: Putative ankyrin repeat protein RP714 (107 aa).

ANK repeat units lie at residues 7–36 (PPLS…DIDV), 40–69 (NGNS…TIDA), and 73–102 (ELAT…NKSA).

The sequence is that of Putative ankyrin repeat protein RP714 from Rickettsia prowazekii (strain Madrid E).